A 238-amino-acid polypeptide reads, in one-letter code: 1-(5-phosphoribosyl)-5-[(5-phosphoribosylamino)methylideneamino] imidazole-4-carboxamide isomerase (238 aa).

The Proton acceptor role is filled by aspartate 8. Aspartate 129 (proton donor) is an active-site residue.

The protein belongs to the HisA/HisF family.

It is found in the cytoplasm. The catalysed reaction is 1-(5-phospho-beta-D-ribosyl)-5-[(5-phospho-beta-D-ribosylamino)methylideneamino]imidazole-4-carboxamide = 5-[(5-phospho-1-deoxy-D-ribulos-1-ylimino)methylamino]-1-(5-phospho-beta-D-ribosyl)imidazole-4-carboxamide. It functions in the pathway amino-acid biosynthesis; L-histidine biosynthesis; L-histidine from 5-phospho-alpha-D-ribose 1-diphosphate: step 4/9. This is 1-(5-phosphoribosyl)-5-[(5-phosphoribosylamino)methylideneamino] imidazole-4-carboxamide isomerase from Brachyspira hyodysenteriae (strain ATCC 49526 / WA1).